The primary structure comprises 332 residues: DNA repair and recombination protein RadA (332 aa).

126–133 contacts ATP; sequence GEFGSGKT.

The protein belongs to the eukaryotic RecA-like protein family.

In terms of biological role, involved in DNA repair and in homologous recombination. Binds and assemble on single-stranded DNA to form a nucleoprotein filament. Hydrolyzes ATP in a ssDNA-dependent manner and promotes DNA strand exchange between homologous DNA molecules. The polypeptide is DNA repair and recombination protein RadA (Pyrobaculum calidifontis (strain DSM 21063 / JCM 11548 / VA1)).